The primary structure comprises 96 residues: Prokineticin Bm8-e (96 aa).

An N-terminal signal peptide occupies residues 1-19 (MKCFAQIVVLLLVIAFSHG). 5 disulfide bridges follow: cysteine 26-cysteine 38, cysteine 32-cysteine 50, cysteine 37-cysteine 78, cysteine 60-cysteine 86, and cysteine 80-cysteine 95.

Belongs to the AVIT (prokineticin) family. Expressed by the skin glands.

The protein resides in the secreted. Functionally, potent agonist for both PKR1/PROKR1 and PKR2/PROKR2, and inducer of a potent and long-lasting hyperalgesia. Also potentiates capsaicin-induced TRPV1 current, when tested on DRG neurons. At subnanomolar concentrations, this protein both induces potent chemotaxis of macrophages and stimulates LPS-induced production of the pro-inflammatory cytokines IL-1 and IL-12. In vivo, potently stimulates the contraction of the guinea-pig gastrointestinal (GI) smooth muscle (nanomolar concentration). This Bombina maxima (Giant fire-bellied toad) protein is Prokineticin Bm8-e.